A 287-amino-acid chain; its full sequence is Diphthine methyl ester synthase (287 aa).

Residues Leu-9, Asp-84, Gly-87, 112-113 (SI), Leu-163, Val-221, and His-248 contribute to the S-adenosyl-L-methionine site.

The protein belongs to the diphthine synthase family.

Its subcellular location is the cytoplasm. It catalyses the reaction 2-[(3S)-amino-3-carboxypropyl]-L-histidyl-[translation elongation factor 2] + 4 S-adenosyl-L-methionine = diphthine methyl ester-[translation elongation factor 2] + 4 S-adenosyl-L-homocysteine + 3 H(+). It participates in protein modification; peptidyl-diphthamide biosynthesis. S-adenosyl-L-methionine-dependent methyltransferase that catalyzes four methylations of the modified target histidine residue in translation elongation factor 2 (EF-2), to form an intermediate called diphthine methyl ester. The four successive methylation reactions represent the second step of diphthamide biosynthesis. The protein is Diphthine methyl ester synthase (dph-5) of Neurospora crassa (strain ATCC 24698 / 74-OR23-1A / CBS 708.71 / DSM 1257 / FGSC 987).